The following is a 330-amino-acid chain: Beta-ketoacyl-[acyl-carrier-protein] synthase III (330 aa).

Catalysis depends on residues Cys114 and His254. Residues 255–259 (QANLR) form an ACP-binding region. Asn284 is an active-site residue.

This sequence belongs to the thiolase-like superfamily. FabH family. In terms of assembly, homodimer.

It localises to the cytoplasm. It carries out the reaction malonyl-[ACP] + acetyl-CoA + H(+) = 3-oxobutanoyl-[ACP] + CO2 + CoA. Its pathway is lipid metabolism; fatty acid biosynthesis. Its function is as follows. Catalyzes the condensation reaction of fatty acid synthesis by the addition to an acyl acceptor of two carbons from malonyl-ACP. Catalyzes the first condensation reaction which initiates fatty acid synthesis and may therefore play a role in governing the total rate of fatty acid production. Possesses both acetoacetyl-ACP synthase and acetyl transacylase activities. Its substrate specificity determines the biosynthesis of branched-chain and/or straight-chain of fatty acids. In Roseiflexus castenholzii (strain DSM 13941 / HLO8), this protein is Beta-ketoacyl-[acyl-carrier-protein] synthase III.